Reading from the N-terminus, the 369-residue chain is Peptide chain release factor 1 (369 aa).

Gln238 carries the post-translational modification N5-methylglutamine.

The protein belongs to the prokaryotic/mitochondrial release factor family. In terms of processing, methylated by PrmC. Methylation increases the termination efficiency of RF1.

The protein localises to the cytoplasm. Peptide chain release factor 1 directs the termination of translation in response to the peptide chain termination codons UAG and UAA. The protein is Peptide chain release factor 1 of Parabacteroides distasonis (strain ATCC 8503 / DSM 20701 / CIP 104284 / JCM 5825 / NCTC 11152).